Reading from the N-terminus, the 374-residue chain is MAAPPRPAPSPPAPRRLDTSDVLQQIMAITDQSLDEAQARKHALNCHRMKPALFSVLCEIKEKTVVSIRGIQDEDPPDAQLLRLDNMLLAEGVCRPEKRGRGGAVARAGTATPGGCPNDNSIEHSDYRAKLSQIRQIYHSELEKYEQACREFTTHVTNLLQEQSRMRPVSPKEIERMVGAIHGKFSAIQMQLKQSTCEAVMTLRSRLLDARRKRRNFSKQATEVLNEYFYSHLNNPYPSEEAKEELARKGGLTISQVSNWFGNKRIRYKKNMGKFQEEATIYTGKTAVDTTEVGVPGNHASCLSTPSSGSSGPFPLPSAGDAFLTLRTLASLQPPPGGGCLQSQAQGSWQGATPQPATASPAGDPGSINSSTSN.

A PBC domain is found at 14 to 209; the sequence is PRRLDTSDVL…VMTLRSRLLD (196 aa). The tract at residues 21–100 is PBC-A; sequence DVLQQIMAIT…EGVCRPEKRG (80 aa). The segment at 103–209 is PBC-B; it reads GAVARAGTAT…VMTLRSRLLD (107 aa). The homeobox; TALE-type DNA-binding region spans 210–272; sequence ARRKRRNFSK…NKRIRYKKNM (63 aa). The tract at residues 333–374 is disordered; the sequence is QPPPGGGCLQSQAQGSWQGATPQPATASPAGDPGSINSSTSN. The segment covering 341-358 has biased composition (polar residues); sequence LQSQAQGSWQGATPQPAT.

This sequence belongs to the TALE/PBX homeobox family.

It is found in the nucleus. The protein is Pre-B-cell leukemia transcription factor 4 (PBX4) of Homo sapiens (Human).